The primary structure comprises 88 residues: Large ribosomal subunit protein bL27 (88 aa).

Over residues 1 to 13 (MATKKSGGSSSNG) the composition is skewed to low complexity. A disordered region spans residues 1–24 (MATKKSGGSSSNGRDSRGRRLGVK).

The protein belongs to the bacterial ribosomal protein bL27 family.

The chain is Large ribosomal subunit protein bL27 from Ehrlichia ruminantium (strain Gardel).